A 1441-amino-acid chain; its full sequence is Pleiotropic drug resistance protein TUR2 (1441 aa).

Residues 158–430 form the ABC transporter 1 domain; that stretch reads LSALHLMPSG…FESMGFKCPE (273 aa). 191–198 provides a ligand contact to ATP; that stretch reads GPPGAGKT. An ABC transmembrane type-2 1 domain is found at 508 to 721; that stretch reads ELLKACIDRE…AQNAIAVNEF (214 aa). The next 6 helical transmembrane spans lie at 526-546, 559-579, 614-634, 646-666, 671-691, and 756-776; these read FVYIFKVVQLIVLALIAMTVF, ATIFFGAMFLGLVTHLFNGFA, IPISFVECGVWIAMTYYVIGF, LLLVLISQVASGLFRLLAAVG, VADTFGAFAQLVLLVLGGFII, and IGVGALIGYMVLFNFLFILFL. One can recognise an ABC transporter 2 domain in the interval 843-1095; sequence ITFDNVKYSV…HLIKYFESID (253 aa). ATP is bound at residue 888–895; the sequence is GVSGRGKT. One can recognise an ABC transmembrane type-2 2 domain in the interval 1168–1382; that stretch reads MQCLACLWKQ…TLYGLVVSQF (215 aa). Helical transmembrane passes span 1187 to 1207, 1215 to 1235, 1275 to 1295, 1302 to 1322, 1332 to 1352, 1363 to 1383, and 1413 to 1433; these read YTATRLFFTVVIALIFGTIFW, TSLDLINAMGSMYAAVLFIGI, VPHILVQTLLYGLLVYSMIGF, FLWYMFFMFFTFLYFTYYGMM, IAAIVAAAFYAIWNIFAGFII, WYYWACPVAWTLYGLVVSQFG, and VVGVMVVVFTVLFASIFAFSI.

This sequence belongs to the ABC transporter superfamily. ABCG family. PDR (TC 3.A.1.205) subfamily. In terms of tissue distribution, ubiquitous.

It localises to the cell membrane. Its function is as follows. May be a general defense protein. Seems involved in turion (dormant buds) formation. Confers resistance to the diterpenoid antifungal agent sclareol. The chain is Pleiotropic drug resistance protein TUR2 (TUR2) from Spirodela polyrhiza (Giant duckweed).